We begin with the raw amino-acid sequence, 370 residues long: Histidinol-phosphate aminotransferase 3 (370 aa).

An N6-(pyridoxal phosphate)lysine modification is found at Lys-229.

Belongs to the class-II pyridoxal-phosphate-dependent aminotransferase family. Histidinol-phosphate aminotransferase subfamily. As to quaternary structure, homodimer. Pyridoxal 5'-phosphate serves as cofactor.

It carries out the reaction L-histidinol phosphate + 2-oxoglutarate = 3-(imidazol-4-yl)-2-oxopropyl phosphate + L-glutamate. It functions in the pathway amino-acid biosynthesis; L-histidine biosynthesis; L-histidine from 5-phospho-alpha-D-ribose 1-diphosphate: step 7/9. The sequence is that of Histidinol-phosphate aminotransferase 3 (hisC3) from Rhizobium meliloti (strain 1021) (Ensifer meliloti).